Here is a 343-residue protein sequence, read N- to C-terminus: Ferredoxin--NADP reductase (343 aa).

Residues Asp36, Gln44, Tyr49, Val89, Phe124, Asp289, and Thr330 each coordinate FAD.

It belongs to the ferredoxin--NADP reductase type 2 family. As to quaternary structure, homodimer. FAD is required as a cofactor.

It carries out the reaction 2 reduced [2Fe-2S]-[ferredoxin] + NADP(+) + H(+) = 2 oxidized [2Fe-2S]-[ferredoxin] + NADPH. In Mesorhizobium japonicum (strain LMG 29417 / CECT 9101 / MAFF 303099) (Mesorhizobium loti (strain MAFF 303099)), this protein is Ferredoxin--NADP reductase.